An 85-amino-acid polypeptide reads, in one-letter code: Defensin-like protein 112 (85 aa).

A signal peptide spans 1–24 (MAISKKMLTTFVLTILLAVSFVHC). Intrachain disulfides connect cysteine 40–cysteine 80, cysteine 46–cysteine 71, cysteine 56–cysteine 78, and cysteine 60–cysteine 79.

It belongs to the DEFL family.

The protein localises to the secreted. The protein is Defensin-like protein 112 of Arabidopsis thaliana (Mouse-ear cress).